The primary structure comprises 157 residues: 3-hydroxyacyl-[acyl-carrier-protein] dehydratase FabZ (157 aa).

H58 is an active-site residue.

It belongs to the thioester dehydratase family. FabZ subfamily.

It is found in the cytoplasm. It catalyses the reaction a (3R)-hydroxyacyl-[ACP] = a (2E)-enoyl-[ACP] + H2O. Its function is as follows. Involved in unsaturated fatty acids biosynthesis. Catalyzes the dehydration of short chain beta-hydroxyacyl-ACPs and long chain saturated and unsaturated beta-hydroxyacyl-ACPs. The polypeptide is 3-hydroxyacyl-[acyl-carrier-protein] dehydratase FabZ (Rhizobium rhizogenes (strain K84 / ATCC BAA-868) (Agrobacterium radiobacter)).